Here is a 350-residue protein sequence, read N- to C-terminus: Protein O-mannose kinase (350 aa).

N-acetylmethionine is present on Met-1. The Cytoplasmic segment spans residues 1 to 20 (MEKQPQNSRRGLAPREVPPA). The chain crosses the membrane as a helical; Signal-anchor for type II membrane protein span at residues 21–43 (VGLLLIMALMNTLLYLCLDHFFI). Over 44–350 (APRQSTVDPT…AMMSQAREML (307 aa)) the chain is Lumenal. The 270-residue stretch at 81-350 (VRQLKRVGEG…AMMSQAREML (270 aa)) folds into the Protein kinase domain. Residues Asn-165, Asn-220, and Asn-235 are each glycosylated (N-linked (GlcNAc...) asparagine).

It belongs to the protein kinase superfamily. Ser/Thr protein kinase family. STKL subfamily. Highest expression is observed in brain, skeletal muscle, kidney and heart in fetal and adult tissues.

The protein localises to the endoplasmic reticulum membrane. The enzyme catalyses 3-O-[beta-D-GalNAc-(1-&gt;3)-beta-D-GlcNAc-(1-&gt;4)-alpha-D-Man]-L-Thr-[protein] + ATP = 3-O-[beta-D-GalNAc-(1-&gt;3)-beta-D-GlcNAc-(1-&gt;4)-(O-6-P-alpha-D-Man)]-Thr-[protein] + ADP + H(+). Functionally, protein O-mannose kinase that specifically mediates phosphorylation at the 6-position of an O-mannose of the trisaccharide (N-acetylgalactosamine (GalNAc)-beta-1,3-N-acetylglucosamine (GlcNAc)-beta-1,4-mannose) to generate phosphorylated O-mannosyl trisaccharide (N-acetylgalactosamine-beta-1,3-N-acetylglucosamine-beta-1,4-(phosphate-6-)mannose). Phosphorylated O-mannosyl trisaccharide is a carbohydrate structure present in alpha-dystroglycan (DAG1), which is required for binding laminin G-like domain-containing extracellular proteins with high affinity. Only shows kinase activity when the GalNAc-beta-3-GlcNAc-beta-terminus is linked to the 4-position of O-mannose, suggesting that this disaccharide serves as the substrate recognition motif. This chain is Protein O-mannose kinase (POMK), found in Homo sapiens (Human).